The sequence spans 343 residues: Ornithine carbamoyltransferase (343 aa).

Carbamoyl phosphate-binding positions include 62–65, glutamine 89, arginine 113, and 140–143; these read STRT and HPTQ. Residues asparagine 172, aspartate 236, and 240–241 contribute to the L-ornithine site; that span reads SM. Carbamoyl phosphate contacts are provided by residues 278 to 279 and arginine 323; that span reads CL.

Belongs to the aspartate/ornithine carbamoyltransferase superfamily. OTCase family.

Its subcellular location is the cytoplasm. The enzyme catalyses carbamoyl phosphate + L-ornithine = L-citrulline + phosphate + H(+). It functions in the pathway amino-acid degradation; L-arginine degradation via ADI pathway; carbamoyl phosphate from L-arginine: step 2/2. Reversibly catalyzes the transfer of the carbamoyl group from carbamoyl phosphate (CP) to the N(epsilon) atom of ornithine (ORN) to produce L-citrulline. The sequence is that of Ornithine carbamoyltransferase from Levilactobacillus brevis (strain ATCC 367 / BCRC 12310 / CIP 105137 / JCM 1170 / LMG 11437 / NCIMB 947 / NCTC 947) (Lactobacillus brevis).